Here is a 320-residue protein sequence, read N- to C-terminus: Cytochrome f (320 aa).

A signal peptide spans 1–35 (MQTRNTFSWIREEITRSISVSLMIYIITWASISSA). Heme contacts are provided by Y36, C56, C59, and H60. The chain crosses the membrane as a helical span at residues 286–306 (VQGLLFFLGSVVLAQIFLVLK).

Belongs to the cytochrome f family. As to quaternary structure, the 4 large subunits of the cytochrome b6-f complex are cytochrome b6, subunit IV (17 kDa polypeptide, petD), cytochrome f and the Rieske protein, while the 4 small subunits are PetG, PetL, PetM and PetN. The complex functions as a dimer. Heme serves as cofactor.

The protein localises to the plastid. It localises to the chloroplast thylakoid membrane. In terms of biological role, component of the cytochrome b6-f complex, which mediates electron transfer between photosystem II (PSII) and photosystem I (PSI), cyclic electron flow around PSI, and state transitions. This is Cytochrome f from Crucihimalaya wallichii (Rock-cress).